Here is a 498-residue protein sequence, read N- to C-terminus: NAC domain-containing protein 75 (498 aa).

The NAC domain occupies 48–215 (LPAGVKFDPT…ELVVSKIFYQ (168 aa)). The DNA-binding element occupies 166–221 (KGCKKILVLYTNFGKNRKPEKTNWVMHQYHLGTHEEEKEGELVVSKIFYQTQPRQC). Disordered regions lie at residues 225-278 (SSTS…PNRS), 338-374 (VMAE…QRHH), 423-443 (QQQL…GGRS), and 457-498 (STTH…DHHG). Gly residues predominate over residues 233–248 (IGGGGGEASSGGGGGE). Over residues 256-266 (GTTSGGSCSSS) the composition is skewed to low complexity. Residues 356–374 (HMAHDHHHHHHQQQQQRHH) are compositionally biased toward basic residues. The segment covering 466 to 475 (GSSSMGNQQE) has biased composition (polar residues).

As to expression, expressed in the vascular cylinder of roots. Expressed in the differentiation zone of the root stele.

Its subcellular location is the nucleus. Its function is as follows. Transcription activator involved in xylem formation. Promotes the expression of the secondary wall-associated transcription factor MYB46. Functions upstream of NAC030/VND7, a master switch of xylem vessel differentiation. Acts as a upstream regulator of NAC101/VND6 and LBD30/ASL19. The sequence is that of NAC domain-containing protein 75 from Arabidopsis thaliana (Mouse-ear cress).